A 313-amino-acid chain; its full sequence is Glutathione synthetase (313 aa).

In terms of domain architecture, ATP-grasp spans 125–309; sequence KIFVTEFADL…IASLFWDAVE (185 aa). Residue 151–207 coordinates ATP; sequence RKEFGDIIVKPLYGNGGAGIFHLHEADRNLASLLEMFGQLFREPYIVQRYLKDVRKG. Positions 280 and 282 each coordinate Mg(2+).

It belongs to the prokaryotic GSH synthase family. It depends on Mg(2+) as a cofactor. Requires Mn(2+) as cofactor.

It carries out the reaction gamma-L-glutamyl-L-cysteine + glycine + ATP = glutathione + ADP + phosphate + H(+). Its pathway is sulfur metabolism; glutathione biosynthesis; glutathione from L-cysteine and L-glutamate: step 2/2. The chain is Glutathione synthetase from Mesorhizobium japonicum (strain LMG 29417 / CECT 9101 / MAFF 303099) (Mesorhizobium loti (strain MAFF 303099)).